The primary structure comprises 257 residues: Tryptophan synthase alpha chain (257 aa).

Active-site proton acceptor residues include glutamate 46 and aspartate 57.

The protein belongs to the TrpA family. In terms of assembly, tetramer of two alpha and two beta chains.

The enzyme catalyses (1S,2R)-1-C-(indol-3-yl)glycerol 3-phosphate + L-serine = D-glyceraldehyde 3-phosphate + L-tryptophan + H2O. Its pathway is amino-acid biosynthesis; L-tryptophan biosynthesis; L-tryptophan from chorismate: step 5/5. The alpha subunit is responsible for the aldol cleavage of indoleglycerol phosphate to indole and glyceraldehyde 3-phosphate. This is Tryptophan synthase alpha chain from Parabacteroides distasonis (strain ATCC 8503 / DSM 20701 / CIP 104284 / JCM 5825 / NCTC 11152).